A 97-amino-acid polypeptide reads, in one-letter code: Defensin-like protein 301 (97 aa).

A signal peptide spans 1–24; it reads MEKVTSIFFVLLLISSCLILRSQG. 6 cysteine pairs are disulfide-bonded: Cys28-Cys47, Cys34-Cys53, Cys39-Cys55, Cys65-Cys84, Cys71-Cys92, and Cys76-Cys94.

Belongs to the DEFL family.

The protein localises to the secreted. This is Defensin-like protein 301 from Arabidopsis thaliana (Mouse-ear cress).